Here is a 233-residue protein sequence, read N- to C-terminus: Movement and silencing protein TGBp1 (233 aa).

In terms of domain architecture, (+)RNA virus helicase ATP-binding spans 1–133 (MNHFINLLVA…CKLLSSLGIK (133 aa)). The (+)RNA virus helicase C-terminal domain occupies 134–233 (VESHRRDRDV…EFPHTTSRPQ (100 aa)).

The protein belongs to the Tymovirales TGBp1 protein family. In terms of assembly, homodimer and homooligomer. Interacts with capsid protein. Interacts with host AGO1; this interaction targets the host protein for degradation, thereby suppressing the antiviral RNA silencing.

Its subcellular location is the host cytoplasm. Its function is as follows. Transports viral genome to neighboring plant cells directly through plasmosdesmata, without any budding. The movement protein allows efficient cell to cell propagation, by bypassing the host cell wall barrier. Increases plasmodesma size exclusion limit. Acts as a suppressor of RNA-mediated gene silencing, also known as post-transcriptional gene silencing (PTGS), a mechanism of plant viral defense that limits the accumulation of viral RNAs. This is Movement and silencing protein TGBp1 from Carica papaya (Papaya).